Here is a 378-residue protein sequence, read N- to C-terminus: Succinyl-diaminopimelate desuccinylase (378 aa).

Zn(2+) is bound at residue His66. Residue Asp68 is part of the active site. Residue Asp99 coordinates Zn(2+). Glu133 acts as the Proton acceptor in catalysis. 3 residues coordinate Zn(2+): Glu134, Glu162, and His348.

It belongs to the peptidase M20A family. DapE subfamily. As to quaternary structure, homodimer. Zn(2+) is required as a cofactor. Co(2+) serves as cofactor.

It catalyses the reaction N-succinyl-(2S,6S)-2,6-diaminopimelate + H2O = (2S,6S)-2,6-diaminopimelate + succinate. Its pathway is amino-acid biosynthesis; L-lysine biosynthesis via DAP pathway; LL-2,6-diaminopimelate from (S)-tetrahydrodipicolinate (succinylase route): step 3/3. In terms of biological role, catalyzes the hydrolysis of N-succinyl-L,L-diaminopimelic acid (SDAP), forming succinate and LL-2,6-diaminopimelate (DAP), an intermediate involved in the bacterial biosynthesis of lysine and meso-diaminopimelic acid, an essential component of bacterial cell walls. This Halorhodospira halophila (strain DSM 244 / SL1) (Ectothiorhodospira halophila (strain DSM 244 / SL1)) protein is Succinyl-diaminopimelate desuccinylase.